A 257-amino-acid polypeptide reads, in one-letter code: Spindlin-2C (257 aa).

Residues 1–47 form a disordered region; it reads MKTPHKKGAAKEQMGEGVGHHIGSTTIKKKKASQKRQRSRSSSRRSI. Positions 27–43 are enriched in basic residues; sequence IKKKKASQKRQRSRSSS. 3 tudor-like domain regions span residues 48–97, 127–176, and 208–253; these read VGCR…LELH, IGKA…YQLL, and IGKH…YDLV. 2 histone H3K4me3 and H3R8me2a binding regions span residues glutamate 136 and 244–246; that span reads DFH.

It belongs to the SPIN/STSY family. Interacts with C11orf84/SPINDOC.

It localises to the nucleus. In terms of biological role, may be involved in the regulation of cell cycle progression. Exhibits H3K4me3-binding activity. The protein is Spindlin-2C (Spin2c) of Mus musculus (Mouse).